The primary structure comprises 344 residues: N-acetyl-gamma-glutamyl-phosphate reductase (344 aa).

The active site involves Cys147.

Belongs to the NAGSA dehydrogenase family. Type 1 subfamily.

It localises to the cytoplasm. The enzyme catalyses N-acetyl-L-glutamate 5-semialdehyde + phosphate + NADP(+) = N-acetyl-L-glutamyl 5-phosphate + NADPH + H(+). The protein operates within amino-acid biosynthesis; L-arginine biosynthesis; N(2)-acetyl-L-ornithine from L-glutamate: step 3/4. Functionally, catalyzes the NADPH-dependent reduction of N-acetyl-5-glutamyl phosphate to yield N-acetyl-L-glutamate 5-semialdehyde. In Bacillus amyloliquefaciens (Bacillus velezensis), this protein is N-acetyl-gamma-glutamyl-phosphate reductase.